The chain runs to 74 residues: U19-theraphotoxin-Cg1a (74 aa).

The first 7 residues, 1–7 (IMFVWAS), serve as a signal peptide directing secretion. Residues 8–36 (AAEVEERGSDQRDSPASLKSMETIFQSEQ) constitute a propeptide that is removed on maturation. Intrachain disulfides connect C39–C53, C46–C58, and C52–C66.

This sequence belongs to the neurotoxin 10 (Hwtx-1) family. 38 (Jztx-33) subfamily. Expressed by the venom gland.

The protein resides in the secreted. Functionally, probable ion channel inhibitor. This Chilobrachys guangxiensis (Chinese earth tiger tarantula) protein is U19-theraphotoxin-Cg1a.